A 140-amino-acid chain; its full sequence is MPTINQLVRKGRQKKVFKSKSPALNKGYNSFKKEQTNVSSPQKRGVCTRVGTMTPKKPNSALRKYARVRLTNGIEVTAYIPGIGHNLQEHSVVLIRGGRVKDLPGVRYHIVRGALDTAGVANRMQGRSKYGAKKPKAAKK.

Positions 33 to 55 are disordered; the sequence is KEQTNVSSPQKRGVCTRVGTMTP. Aspartate 102 carries the 3-methylthioaspartic acid modification.

Belongs to the universal ribosomal protein uS12 family. Part of the 30S ribosomal subunit. Contacts proteins S8 and S17. May interact with IF1 in the 30S initiation complex.

Functionally, with S4 and S5 plays an important role in translational accuracy. In terms of biological role, interacts with and stabilizes bases of the 16S rRNA that are involved in tRNA selection in the A site and with the mRNA backbone. Located at the interface of the 30S and 50S subunits, it traverses the body of the 30S subunit contacting proteins on the other side and probably holding the rRNA structure together. The combined cluster of proteins S8, S12 and S17 appears to hold together the shoulder and platform of the 30S subunit. This chain is Small ribosomal subunit protein uS12, found in Geobacillus thermodenitrificans (strain NG80-2).